We begin with the raw amino-acid sequence, 254 residues long: Tumor necrosis factor ligand superfamily member 9 (254 aa).

Residues 1 to 28 are Cytoplasmic-facing; it reads MEYASDASLDPEAPWPPAPRARACRVLP. A helical; Signal-anchor for type II membrane protein membrane pass occupies residues 29-49; sequence WALVAGLLLLLLLAAACAVFL. The Extracellular segment spans residues 50–254; sequence ACPWAVSGAR…PAGLPSPRSE (205 aa). A THD domain is found at 91-240; it reads MFAQLVAQNV…GATVLGLFRV (150 aa).

This sequence belongs to the tumor necrosis factor family. Homotrimer. Expressed in brain, placenta, lung, skeletal muscle and kidney.

Its subcellular location is the membrane. In terms of biological role, cytokine that binds to TNFRSF9. Induces the proliferation of activated peripheral blood T-cells. May have a role in activation-induced cell death (AICD). May play a role in cognate interactions between T-cells and B-cells/macrophages. This Homo sapiens (Human) protein is Tumor necrosis factor ligand superfamily member 9 (TNFSF9).